The chain runs to 321 residues: Phosphate-import protein PhnD (321 aa).

A signal peptide spans 1-22 (MKIRAHHKIATAAACVALLASA). Cys-23 is lipidated: N-palmitoyl cysteine. Residue Cys-23 is the site of S-diacylglycerol cysteine attachment.

This sequence belongs to the phosphate/phosphite/phosphonate binding protein family. In terms of assembly, the complex is composed of two ATP-binding proteins (PhnC), two transmembrane proteins (PhnE) and a solute-binding protein (PhnD).

Its subcellular location is the cell membrane. Functionally, part of the ABC transporter complex PhnCDE involved in phosphate import. Responsible for phosphate binding. In Mycolicibacterium smegmatis (strain ATCC 700084 / mc(2)155) (Mycobacterium smegmatis), this protein is Phosphate-import protein PhnD (phnD).